Here is a 549-residue protein sequence, read N- to C-terminus: Chaperonin GroEL 2 (549 aa).

ATP contacts are provided by residues 29 to 32 (TLGP), Lys-50, 86 to 90 (DGTTT), Gly-414, 477 to 479 (NAA), and Asp-493.

It belongs to the chaperonin (HSP60) family. As to quaternary structure, forms a cylinder of 14 subunits composed of two heptameric rings stacked back-to-back. Interacts with the co-chaperonin GroES.

The protein localises to the cytoplasm. It catalyses the reaction ATP + H2O + a folded polypeptide = ADP + phosphate + an unfolded polypeptide.. Functionally, together with its co-chaperonin GroES, plays an essential role in assisting protein folding. The GroEL-GroES system forms a nano-cage that allows encapsulation of the non-native substrate proteins and provides a physical environment optimized to promote and accelerate protein folding. The chain is Chaperonin GroEL 2 from Myxococcus xanthus (strain DK1622).